A 257-amino-acid polypeptide reads, in one-letter code: UPF0246 protein BPP3440 (257 aa).

Belongs to the UPF0246 family.

This chain is UPF0246 protein BPP3440, found in Bordetella parapertussis (strain 12822 / ATCC BAA-587 / NCTC 13253).